We begin with the raw amino-acid sequence, 202 residues long: Xanthine phosphoribosyltransferase (202 aa).

Positions 20 and 27 each coordinate xanthine. 128–132 (ANGEA) is a binding site for 5-phospho-alpha-D-ribose 1-diphosphate. Residue Lys156 coordinates xanthine.

This sequence belongs to the purine/pyrimidine phosphoribosyltransferase family. Xpt subfamily. In terms of assembly, homodimer.

It localises to the cytoplasm. It carries out the reaction XMP + diphosphate = xanthine + 5-phospho-alpha-D-ribose 1-diphosphate. The protein operates within purine metabolism; XMP biosynthesis via salvage pathway; XMP from xanthine: step 1/1. In terms of biological role, converts the preformed base xanthine, a product of nucleic acid breakdown, to xanthosine 5'-monophosphate (XMP), so it can be reused for RNA or DNA synthesis. This is Xanthine phosphoribosyltransferase from Alkaliphilus metalliredigens (strain QYMF).